The primary structure comprises 491 residues: Probable cysteine proteinase 024R (491 aa).

Catalysis depends on residues cysteine 132, histidine 325, and asparagine 355. A helical membrane pass occupies residues 467–487 (ALDLALLVLPALLIVIVVLIG).

The protein belongs to the peptidase C1 family.

Its subcellular location is the membrane. Functionally, probable cysteine protease. The polypeptide is Probable cysteine proteinase 024R (Invertebrate iridescent virus 3 (IIV-3)).